The primary structure comprises 490 residues: Bifunctional protein HldE (490 aa).

The tract at residues 1–330 is ribokinase; it reads MERKEIESLF…AEIGHAHPDS (330 aa). ATP is bound at residue 205-208; sequence NRKE. D275 is an active-site residue. The interval 356-490 is cytidylyltransferase; sequence FTNGCFDLLH…EKIRTGSIKE (135 aa).

In the N-terminal section; belongs to the carbohydrate kinase PfkB family. This sequence in the C-terminal section; belongs to the cytidylyltransferase family. In terms of assembly, homodimer.

It carries out the reaction D-glycero-beta-D-manno-heptose 7-phosphate + ATP = D-glycero-beta-D-manno-heptose 1,7-bisphosphate + ADP + H(+). The catalysed reaction is D-glycero-beta-D-manno-heptose 1-phosphate + ATP + H(+) = ADP-D-glycero-beta-D-manno-heptose + diphosphate. It functions in the pathway nucleotide-sugar biosynthesis; ADP-L-glycero-beta-D-manno-heptose biosynthesis; ADP-L-glycero-beta-D-manno-heptose from D-glycero-beta-D-manno-heptose 7-phosphate: step 1/4. It participates in nucleotide-sugar biosynthesis; ADP-L-glycero-beta-D-manno-heptose biosynthesis; ADP-L-glycero-beta-D-manno-heptose from D-glycero-beta-D-manno-heptose 7-phosphate: step 3/4. In terms of biological role, catalyzes the phosphorylation of D-glycero-D-manno-heptose 7-phosphate at the C-1 position to selectively form D-glycero-beta-D-manno-heptose-1,7-bisphosphate. Its function is as follows. Catalyzes the ADP transfer from ATP to D-glycero-beta-D-manno-heptose 1-phosphate, yielding ADP-D-glycero-beta-D-manno-heptose. This is Bifunctional protein HldE from Geotalea uraniireducens (strain Rf4) (Geobacter uraniireducens).